The primary structure comprises 154 residues: Phospholipase A2 OS1 (154 aa).

A signal peptide spans 1–27 (MHPAHLLVLLAVCVSLLGAARIPPLPL). 7 disulfides stabilise this stretch: cysteine 38–cysteine 104, cysteine 54–cysteine 153, cysteine 56–cysteine 72, cysteine 71–cysteine 132, cysteine 78–cysteine 125, cysteine 88–cysteine 118, and cysteine 111–cysteine 123. Ca(2+) contacts are provided by glycine 57 and glycine 59. The active site involves histidine 75. Aspartate 76 provides a ligand contact to Ca(2+). Aspartate 126 is an active-site residue.

This sequence belongs to the phospholipase A2 family. Group I subfamily. D49 sub-subfamily. In terms of assembly, monomer. Ca(2+) is required as a cofactor. As to expression, expressed by the venom gland.

Its subcellular location is the secreted. It carries out the reaction a 1,2-diacyl-sn-glycero-3-phosphocholine + H2O = a 1-acyl-sn-glycero-3-phosphocholine + a fatty acid + H(+). Snake venom phospholipase A2 (PLA2) that has a low specific activity on phospholipid substrates, and is neither neurotoxic, nor myotoxic. Induces endothelial cell migration which is mediated, at least in part, by its hydrolytic products. Shows antimalarial activity, but is not able to potently inhibit HIV-1 replication. Binds in a calcium-independent fashion with very high affinity to a muscle-type (M-type) PLA2 receptor, but is a very poor ligand for neuronal-type (N-type) receptors. PLA2 catalyzes the calcium-dependent hydrolysis of the 2-acyl groups in 3-sn-phosphoglycerides. In Oxyuranus scutellatus scutellatus (Australian taipan), this protein is Phospholipase A2 OS1.